The primary structure comprises 358 residues: N-acylethanolamine-hydrolyzing acid amidase (358 aa).

The N-terminal stretch at 1–26 (MQGTGHPVRPVLELLLLLLLLAGVGG) is a signal peptide. 2 N-linked (GlcNAc...) asparagine glycosylation sites follow: N39 and N108. The Nucleophile role is filled by C127. Residues N310, N334, and N356 are each glycosylated (N-linked (GlcNAc...) asparagine).

Belongs to the acid ceramidase family. As to quaternary structure, heterodimer of an alpha and a beta subunit, produced by autocatalytic cleavage. Post-translationally, N-glycosylated. Tunicamycin treatment causes a reduction in specific activity against N-palmitoylethanolamine. In terms of processing, autoproteolytic cleavage at pH 4.5 gives rise to the alpha and beta subunit. Cleavage gives rise to a conformation change that activates the enzyme. The same catalytic Cys residue mediates the autoproteolytic cleavage and subsequent hydrolysis of lipid substrates.

The protein resides in the lysosome. It is found in the membrane. It carries out the reaction N-hexadecanoylethanolamine + H2O = ethanolamine + hexadecanoate. It catalyses the reaction an N-(long-chain fatty acyl)ethanolamine + H2O = a long-chain fatty acid + ethanolamine. The enzyme catalyses N-dodecanoylethanolamine + H2O = dodecanoate + ethanolamine. The catalysed reaction is N-tetradecanoylethanolamine + H2O = tetradecanoate + ethanolamine. It carries out the reaction an N-acylsphing-4-enine + H2O = sphing-4-enine + a fatty acid. It catalyses the reaction N-hexadecanoylsphing-4-enine + H2O = sphing-4-enine + hexadecanoate. The enzyme catalyses N-dodecanoylsphing-4-enine + H2O = dodecanoate + sphing-4-enine. The protein operates within lipid metabolism; fatty acid metabolism. In terms of biological role, degrades bioactive fatty acid amides to their corresponding acids, with the following preference: N-palmitoylethanolamine &gt; N-myristoylethanolamine &gt; N-stearoylethanolamine &gt; N-oleoylethanolamine &gt; N-linoleoylethanolamine &gt; N-arachidonoylethanolamine. The chain is N-acylethanolamine-hydrolyzing acid amidase from Oryctolagus cuniculus (Rabbit).